The sequence spans 331 residues: Glucokinase (331 aa).

ATP is bound at residue Gly16–Thr21.

The protein belongs to the bacterial glucokinase family.

It is found in the cytoplasm. It carries out the reaction D-glucose + ATP = D-glucose 6-phosphate + ADP + H(+). The protein is Glucokinase of Pseudomonas aeruginosa (strain UCBPP-PA14).